We begin with the raw amino-acid sequence, 272 residues long: Imidazole glycerol phosphate synthase subunit HisF (272 aa).

Residues Asp11 and Asp130 contribute to the active site.

This sequence belongs to the HisA/HisF family. As to quaternary structure, heterodimer of HisH and HisF.

The protein resides in the cytoplasm. The catalysed reaction is 5-[(5-phospho-1-deoxy-D-ribulos-1-ylimino)methylamino]-1-(5-phospho-beta-D-ribosyl)imidazole-4-carboxamide + L-glutamine = D-erythro-1-(imidazol-4-yl)glycerol 3-phosphate + 5-amino-1-(5-phospho-beta-D-ribosyl)imidazole-4-carboxamide + L-glutamate + H(+). It participates in amino-acid biosynthesis; L-histidine biosynthesis; L-histidine from 5-phospho-alpha-D-ribose 1-diphosphate: step 5/9. Functionally, IGPS catalyzes the conversion of PRFAR and glutamine to IGP, AICAR and glutamate. The HisF subunit catalyzes the cyclization activity that produces IGP and AICAR from PRFAR using the ammonia provided by the HisH subunit. This is Imidazole glycerol phosphate synthase subunit HisF from Methanococcus maripaludis (strain C7 / ATCC BAA-1331).